Reading from the N-terminus, the 188-residue chain is Ribosome-recycling factor (188 aa).

It belongs to the RRF family.

The protein localises to the cytoplasm. Functionally, responsible for the release of ribosomes from messenger RNA at the termination of protein biosynthesis. May increase the efficiency of translation by recycling ribosomes from one round of translation to another. The protein is Ribosome-recycling factor of Blochmanniella floridana.